A 410-amino-acid polypeptide reads, in one-letter code: Argininosuccinate synthase (410 aa).

Residues Ala-13–Ser-21 and Ala-40 contribute to the ATP site. L-citrulline-binding residues include Tyr-91 and Ser-96. ATP is bound at residue Gly-121. Residues Thr-123, Asn-127, and Asp-128 each contribute to the L-aspartate site. Residue Asn-127 participates in L-citrulline binding. Positions 131, 182, 191, 267, and 279 each coordinate L-citrulline.

The protein belongs to the argininosuccinate synthase family. Type 1 subfamily. Homotetramer.

Its subcellular location is the cytoplasm. It catalyses the reaction L-citrulline + L-aspartate + ATP = 2-(N(omega)-L-arginino)succinate + AMP + diphosphate + H(+). It functions in the pathway amino-acid biosynthesis; L-arginine biosynthesis; L-arginine from L-ornithine and carbamoyl phosphate: step 2/3. The protein is Argininosuccinate synthase of Gluconobacter oxydans (strain 621H) (Gluconobacter suboxydans).